The primary structure comprises 1121 residues: Putative ATP-dependent RNA helicase ECM32 (1121 aa).

Residues 157-187 (NSTRKPRKKGGRRVGRGKKGRKGAKIKKEKK) are disordered. The segment covering 160-184 (RKPRKKGGRRVGRGKKGRKGAKIKK) has biased composition (basic residues). The residue at position 227 (Ser-227) is a Phosphoserine. Residues 233–452 (AKVSKSETSR…NQEKNNGKTK (220 aa)) form a disordered region. Basic residues predominate over residues 251–263 (NKGKGNKANHKKN). Polar residues predominate over residues 278 to 287 (IRNNVRNSQP). Residues 307 to 316 (GKNESVDKHQ) show a composition bias toward basic and acidic residues. Positions 323–336 (LNGNGSGSTNTTGL) are enriched in low complexity. Over residues 342–363 (DHAGQKTKGNDKTGNKNPREAK) the composition is skewed to basic and acidic residues. Polar residues predominate over residues 376-413 (KSNNQPNKGTSRWTIGSDTESSREPSISPNENTTSITK). The residue at position 392 (Ser-392) is a Phosphoserine. Basic and acidic residues predominate over residues 426-452 (LNEKSKTTTMPKKLETKNQEKNNGKTK). The residue at position 465 (Thr-465) is a Phosphothreonine. Residue 670-677 (GPPGTGKT) participates in ATP binding.

The protein belongs to the DNA2/NAM7 helicase family. As to quaternary structure, interacts with the peptidyl release factors SUP35 and weakly with SUP45.

Its subcellular location is the cytoplasm. It carries out the reaction ATP + H2O = ADP + phosphate + H(+). In terms of biological role, probable RNA helicase, which may be involved in modulation of the translation termination process. Probably unwinds double-stranded RNA. In vitro, unwinds covalently closed, circular DNA in the presence of a DNA topoisomerase TOP1 and replication factor-A protein RFA1. This chain is Putative ATP-dependent RNA helicase ECM32 (ECM32), found in Saccharomyces cerevisiae (strain ATCC 204508 / S288c) (Baker's yeast).